Consider the following 83-residue polypeptide: uncharacterized protein (83 aa).

This is an uncharacterized protein from Thermoproteus tenax (TTV1).